The following is a 640-amino-acid chain: Chitin elicitor receptor kinase 1 (640 aa).

The signal sequence occupies residues 1-31 (MKFQMKMKSELCRTYKYWLILLVLWLSGVTQ). At 32–248 (RETGVLIVDA…GTVHWRSNVG (217 aa)) the chain is on the extracellular side. 3 cysteine pairs are disulfide-bonded: C43/C104, C49/C166, and C102/C164. LysM domains are found at residues 53–98 (AYYR…NIYL), 113–160 (FSYT…SLTI), and 179–227 (STYV…KAAN). Residues 119–125 (TNDTAEK) and 148–154 (DLSSIYS) each bind chitin. The helical transmembrane segment at 249–269 (IIVGVVVGGIVLAVLLLFALI) threads the bilayer. The Cytoplasmic segment spans residues 270–640 (FGFKHFRRRK…SQPPSGNDQL (371 aa)). The tract at residues 286 to 308 (MQQSGLLSSSSMAGSKPSRSGST) is disordered. A compositionally biased stretch (low complexity) spans 289 to 307 (SGLLSSSSMAGSKPSRSGS). The region spanning 330–612 (FSLAKKIGQG…RFAVVQLMTL (283 aa)) is the Protein kinase domain. ATP-binding positions include 336-344 (IGQGGFASV) and K357. The active-site Proton acceptor is D452.

Belongs to the protein kinase superfamily. Ser/Thr protein kinase family.

Its subcellular location is the cell membrane. The catalysed reaction is L-seryl-[protein] + ATP = O-phospho-L-seryl-[protein] + ADP + H(+). It catalyses the reaction L-threonyl-[protein] + ATP = O-phospho-L-threonyl-[protein] + ADP + H(+). Lysin motif (LysM) receptor kinase required as a cell surface receptor for chitin elicitor (chitooligosaccharides) signaling leading to innate immunity in response to biotic stresses. The CERK1, MEKK1a/b, MKK1a/b/c and MPK4a/b proteins are involved in pathogen defense. The pathway induces rapid growth inhibition, cell wall depositions and accumulation of defense-related transcripts. This protein is required for response to chitin. Is able to complement the A.thaliana cerk1 mutant. The polypeptide is Chitin elicitor receptor kinase 1 (Physcomitrium patens (Spreading-leaved earth moss)).